Consider the following 225-residue polypeptide: PKHD-type hydroxylase KPK_3192 (225 aa).

A Fe2OG dioxygenase domain is found at 78 to 177 (TISAPLFNRY…RQASFLWIQS (100 aa)). Positions 96, 98, and 158 each coordinate Fe cation. A 2-oxoglutarate-binding site is contributed by arginine 168.

Requires Fe(2+) as cofactor. The cofactor is L-ascorbate.

This Klebsiella pneumoniae (strain 342) protein is PKHD-type hydroxylase KPK_3192.